We begin with the raw amino-acid sequence, 442 residues long: 3-phosphoshikimate 1-carboxyvinyltransferase (442 aa).

Polar residues predominate over residues 1-11 (MQVSRPLTVSA). The segment at 1 to 25 (MQVSRPLTVSASPKGLSGRTRVPGD) is disordered. Residues Lys26, Ser27, and Arg31 each contribute to the 3-phosphoshikimate site. Position 26 (Lys26) interacts with phosphoenolpyruvate. Phosphoenolpyruvate-binding residues include Gly98 and Arg126. 4 residues coordinate 3-phosphoshikimate: Ser171, Gln173, Asp324, and Lys351. Gln173 provides a ligand contact to phosphoenolpyruvate. The active-site Proton acceptor is Asp324. 2 residues coordinate phosphoenolpyruvate: Arg355 and Arg398.

It belongs to the EPSP synthase family. Monomer.

It localises to the cytoplasm. It catalyses the reaction 3-phosphoshikimate + phosphoenolpyruvate = 5-O-(1-carboxyvinyl)-3-phosphoshikimate + phosphate. It participates in metabolic intermediate biosynthesis; chorismate biosynthesis; chorismate from D-erythrose 4-phosphate and phosphoenolpyruvate: step 6/7. Catalyzes the transfer of the enolpyruvyl moiety of phosphoenolpyruvate (PEP) to the 5-hydroxyl of shikimate-3-phosphate (S3P) to produce enolpyruvyl shikimate-3-phosphate and inorganic phosphate. The polypeptide is 3-phosphoshikimate 1-carboxyvinyltransferase (Gluconobacter oxydans (strain 621H) (Gluconobacter suboxydans)).